The sequence spans 133 residues: MIVAVGHDLIEIARIRRMLEREGVRAERLFTATELAYAGRYRDPAPSLAARFAAKEAFQKVWLRPHGWRDVWVERERTPDGPFPYAAPMLGFAPAIAGEMHERGWVAHLTLTHTREHASAVVILEHLEQRAAP.

Positions 8 and 56 each coordinate Mg(2+).

This sequence belongs to the P-Pant transferase superfamily. AcpS family. The cofactor is Mg(2+).

It localises to the cytoplasm. The enzyme catalyses apo-[ACP] + CoA = holo-[ACP] + adenosine 3',5'-bisphosphate + H(+). In terms of biological role, transfers the 4'-phosphopantetheine moiety from coenzyme A to a Ser of acyl-carrier-protein. This Deinococcus radiodurans (strain ATCC 13939 / DSM 20539 / JCM 16871 / CCUG 27074 / LMG 4051 / NBRC 15346 / NCIMB 9279 / VKM B-1422 / R1) protein is Holo-[acyl-carrier-protein] synthase.